We begin with the raw amino-acid sequence, 390 residues long: Purine permease 21 (390 aa).

The interval 12-34 (QQGKEPIPTDQDERSSVSGSQTK) is disordered. 10 helical membrane-spanning segments follow: residues 44–64 (WLRV…ATIL), 78–98 (LATV…LLSV), 118–138 (LVYI…SIGL), 140–160 (YLPV…TAFF), 169–189 (LTPI…LLAF), 204–224 (YVKG…LLSL), 241–261 (VINM…VGLF), 287–307 (LVWT…LIFE), 312–332 (FSNA…VIIF), and 336–356 (MNGL…SYVY). Positions 367-390 (KSNEIPTTESPDRPEAEGSSEQSK) are disordered.

The protein belongs to the purine permeases (TC 2.A.7.14) family. Expressed in mesophyll cells.

It localises to the membrane. This is Purine permease 21 from Arabidopsis thaliana (Mouse-ear cress).